We begin with the raw amino-acid sequence, 621 residues long: UvrABC system protein C (621 aa).

Positions 20–98 (TAPGVYRMYA…IKSLTPRYNV (79 aa)) constitute a GIY-YIG domain. The region spanning 207–242 (DLLAEELIQAMQVASEHLEFEQAARLRDLLTSLRSM) is the UVR domain.

Belongs to the UvrC family. In terms of assembly, interacts with UvrB in an incision complex.

Its subcellular location is the cytoplasm. Its function is as follows. The UvrABC repair system catalyzes the recognition and processing of DNA lesions. UvrC both incises the 5' and 3' sides of the lesion. The N-terminal half is responsible for the 3' incision and the C-terminal half is responsible for the 5' incision. This chain is UvrABC system protein C, found in Xylella fastidiosa (strain M23).